A 485-amino-acid chain; its full sequence is Cobyric acid synthase (485 aa).

In terms of domain architecture, GATase cobBQ-type spans 248–435 (VLKVVVPVLP…LHGLFESPDA (188 aa)). Residue Cys-329 is the Nucleophile of the active site. His-427 is an active-site residue.

The protein belongs to the CobB/CobQ family. CobQ subfamily.

Its pathway is cofactor biosynthesis; adenosylcobalamin biosynthesis. Its function is as follows. Catalyzes amidations at positions B, D, E, and G on adenosylcobyrinic A,C-diamide. NH(2) groups are provided by glutamine, and one molecule of ATP is hydrogenolyzed for each amidation. This chain is Cobyric acid synthase, found in Stutzerimonas stutzeri (strain A1501) (Pseudomonas stutzeri).